The sequence spans 396 residues: Tryptophan synthase beta chain (396 aa).

Lys86 is subject to N6-(pyridoxal phosphate)lysine.

It belongs to the TrpB family. In terms of assembly, tetramer of two alpha and two beta chains. Pyridoxal 5'-phosphate serves as cofactor.

The catalysed reaction is (1S,2R)-1-C-(indol-3-yl)glycerol 3-phosphate + L-serine = D-glyceraldehyde 3-phosphate + L-tryptophan + H2O. The protein operates within amino-acid biosynthesis; L-tryptophan biosynthesis; L-tryptophan from chorismate: step 5/5. Functionally, the beta subunit is responsible for the synthesis of L-tryptophan from indole and L-serine. The sequence is that of Tryptophan synthase beta chain from Blochmanniella pennsylvanica (strain BPEN).